Here is a 446-residue protein sequence, read N- to C-terminus: MEPIHIIGAGLAGSEAAWQIARAGVPVVLHEMRPQVATFAHRTGDCAEMVCSNSFRSDDDRMNAVGQLHWEMRAAGGLIMAMADRHRLPAGGALAVDRDAFSQAVTQALQAEPLVSFQPGEISDLPSEGHWIVATGPLTSEALGRSIRSLTGEGSLAFFDAIAPIVHAESIDMSICWRQSRYDKGETEEERTAYINCPMTREDYEGFIDALLAADKTEFHEGETAGYFDGCLPIEVMAERGRETLRHGPMKPVGLTNAHNPAEKPYAVVQLRRDNALGTLYNIVGFQTKMKYGAQVDVFRRIPGLQDASFARLGGIHRNTFLNSPRLIDDRLRLRARPHLRFAGQVTGVEGYVESAAMGLLAGRMAAAEALGRDLPPPPATTSMGALVSHITGGADAKTFQPMNVNFGLYPPLDAMRGGRKGRKDRYPAYTDRAKADFQQWVAGES.

8–13 contributes to the FAD binding site; the sequence is GAGLAG.

The protein belongs to the MnmG family. TrmFO subfamily. FAD serves as cofactor.

It localises to the cytoplasm. It catalyses the reaction uridine(54) in tRNA + (6R)-5,10-methylene-5,6,7,8-tetrahydrofolate + NADH + H(+) = 5-methyluridine(54) in tRNA + (6S)-5,6,7,8-tetrahydrofolate + NAD(+). The enzyme catalyses uridine(54) in tRNA + (6R)-5,10-methylene-5,6,7,8-tetrahydrofolate + NADPH + H(+) = 5-methyluridine(54) in tRNA + (6S)-5,6,7,8-tetrahydrofolate + NADP(+). Its function is as follows. Catalyzes the folate-dependent formation of 5-methyl-uridine at position 54 (M-5-U54) in all tRNAs. The protein is Methylenetetrahydrofolate--tRNA-(uracil-5-)-methyltransferase TrmFO of Paracoccus denitrificans (strain Pd 1222).